Consider the following 217-residue polypeptide: Uracil-DNA glycosylase (217 aa).

Catalysis depends on Asp-62, which acts as the Proton acceptor.

Belongs to the uracil-DNA glycosylase (UDG) superfamily. UNG family.

It localises to the cytoplasm. The catalysed reaction is Hydrolyzes single-stranded DNA or mismatched double-stranded DNA and polynucleotides, releasing free uracil.. Excises uracil residues from the DNA which can arise as a result of misincorporation of dUMP residues by DNA polymerase or due to deamination of cytosine. This chain is Uracil-DNA glycosylase, found in Streptococcus gordonii (strain Challis / ATCC 35105 / BCRC 15272 / CH1 / DL1 / V288).